Here is a 266-residue protein sequence, read N- to C-terminus: 5'-nucleotidase SurE (266 aa).

Asp-8, Asp-9, Ser-40, and Asn-98 together coordinate a divalent metal cation.

It belongs to the SurE nucleotidase family. It depends on a divalent metal cation as a cofactor.

The protein resides in the cytoplasm. It catalyses the reaction a ribonucleoside 5'-phosphate + H2O = a ribonucleoside + phosphate. In terms of biological role, nucleotidase that shows phosphatase activity on nucleoside 5'-monophosphates. The sequence is that of 5'-nucleotidase SurE from Parasynechococcus marenigrum (strain WH8102).